The primary structure comprises 219 residues: MIVIIPVSPINSLKTRLSEFLSEEERKYLLLNMLKDIKSALINLDTVVVSRDEEILNFAKKELNAKTIKEREKGLNNAIKQAFEEINQEEILIIPADIPLIKKHHIEDIINLSNHYDMIIAPSRGGGTNLLYLKSKNLIDLKYEGFSFLKHLKEAENKNLKYYIYDSFLVSVDINTPEDLGEIFIHGEKTHTKEYLKSLGIYVEPKHSSAGRFVVKRRD.

This sequence belongs to the CofC family. In terms of assembly, homodimer.

The enzyme catalyses (2S)-2-phospholactate + GTP + H(+) = (2S)-lactyl-2-diphospho-5'-guanosine + diphosphate. Its pathway is cofactor biosynthesis; coenzyme F420 biosynthesis. Its function is as follows. Guanylyltransferase that catalyzes the activation of (2S)-2-phospholactate (2-PL) as (2S)-lactyl-2-diphospho-5'-guanosine, via the condensation of 2-PL with GTP. It is involved in the biosynthesis of coenzyme F420, a hydride carrier cofactor. This Methanocaldococcus vulcanius (strain ATCC 700851 / DSM 12094 / M7) (Methanococcus vulcanius) protein is 2-phospho-L-lactate guanylyltransferase.